The primary structure comprises 512 residues: Glutathione-binding protein GsiB (512 aa).

An N-terminal signal peptide occupies residues 1 to 26 (MARAVHRSGLVALGIATALMASCAFA).

Belongs to the bacterial solute-binding protein 5 family. As to quaternary structure, the complex is composed of two ATP-binding proteins (GsiA), two transmembrane proteins (GsiC and GsiD) and a solute-binding protein (GsiB).

It is found in the periplasm. In terms of biological role, part of the ABC transporter complex GsiABCD involved in glutathione import. Binds glutathione. In Escherichia coli O1:K1 / APEC, this protein is Glutathione-binding protein GsiB.